We begin with the raw amino-acid sequence, 127 residues long: uncharacterized protein (127 aa).

One can recognise an HTH asnC-type domain in the interval 1–46 (MEVGLSPSACLRRIKLMEQAGVIRGYTALVDPTQSESTIAVIINIT).

Functionally, not known, symbiotically active. This is an uncharacterized protein from Sinorhizobium fredii (strain NBRC 101917 / NGR234).